The sequence spans 214 residues: Adenylate kinase (214 aa).

10-15 (GAGKGT) is a binding site for ATP. The segment at 30 to 59 (STGDMLRAAVKSGSELGKQAKDIMDAGKLV) is NMP. AMP is bound by residues T31, R36, 57-59 (KLV), 85-88 (GFPR), and Q92. The tract at residues 122 to 159 (GRRVHAPSGRVYHVKFNPPKVEGKDDVTGEELTTRKDD) is LID. ATP-binding positions include R123 and 132–133 (VY). AMP is bound by residues R156 and R167. K192 carries the post-translational modification N6-acetyllysine. K200 contacts ATP.

This sequence belongs to the adenylate kinase family. Monomer.

The protein resides in the cytoplasm. The catalysed reaction is AMP + ATP = 2 ADP. It functions in the pathway purine metabolism; AMP biosynthesis via salvage pathway; AMP from ADP: step 1/1. Functionally, catalyzes the reversible transfer of the terminal phosphate group between ATP and AMP. Plays an important role in cellular energy homeostasis and in adenine nucleotide metabolism. This Escherichia coli O45:K1 (strain S88 / ExPEC) protein is Adenylate kinase.